The chain runs to 334 residues: Glyceraldehyde-3-phosphate dehydrogenase (334 aa).

Residues 10–11 (RI), aspartate 33, lysine 77, and threonine 119 each bind NAD(+). Residues 149–151 (SCT), threonine 180, 209–210 (TG), and arginine 232 each bind D-glyceraldehyde 3-phosphate. Cysteine 150 serves as the catalytic Nucleophile. An NAD(+)-binding site is contributed by asparagine 314.

Belongs to the glyceraldehyde-3-phosphate dehydrogenase family. As to quaternary structure, homotetramer.

It is found in the cytoplasm. The catalysed reaction is D-glyceraldehyde 3-phosphate + phosphate + NAD(+) = (2R)-3-phospho-glyceroyl phosphate + NADH + H(+). It participates in carbohydrate degradation; glycolysis; pyruvate from D-glyceraldehyde 3-phosphate: step 1/5. Functionally, catalyzes the oxidative phosphorylation of glyceraldehyde 3-phosphate (G3P) to 1,3-bisphosphoglycerate (BPG) using the cofactor NAD. The first reaction step involves the formation of a hemiacetal intermediate between G3P and a cysteine residue, and this hemiacetal intermediate is then oxidized to a thioester, with concomitant reduction of NAD to NADH. The reduced NADH is then exchanged with the second NAD, and the thioester is attacked by a nucleophilic inorganic phosphate to produce BPG. The protein is Glyceraldehyde-3-phosphate dehydrogenase (gap) of Chlamydia trachomatis serovar L2 (strain ATCC VR-902B / DSM 19102 / 434/Bu).